The sequence spans 456 residues: Argininosuccinate lyase (456 aa).

It belongs to the lyase 1 family. Argininosuccinate lyase subfamily.

The protein resides in the cytoplasm. The enzyme catalyses 2-(N(omega)-L-arginino)succinate = fumarate + L-arginine. It functions in the pathway amino-acid biosynthesis; L-arginine biosynthesis; L-arginine from L-ornithine and carbamoyl phosphate: step 3/3. The protein is Argininosuccinate lyase of Listeria innocua serovar 6a (strain ATCC BAA-680 / CLIP 11262).